The sequence spans 316 residues: 4-hydroxy-3-methylbut-2-enyl diphosphate reductase (316 aa).

Position 12 (C12) interacts with [4Fe-4S] cluster. (2E)-4-hydroxy-3-methylbut-2-enyl diphosphate contacts are provided by H41 and H74. Dimethylallyl diphosphate contacts are provided by H41 and H74. Residues H41 and H74 each contribute to the isopentenyl diphosphate site. Residue C96 coordinates [4Fe-4S] cluster. H124 serves as a coordination point for (2E)-4-hydroxy-3-methylbut-2-enyl diphosphate. H124 contributes to the dimethylallyl diphosphate binding site. An isopentenyl diphosphate-binding site is contributed by H124. The active-site Proton donor is the E126. T169 is a binding site for (2E)-4-hydroxy-3-methylbut-2-enyl diphosphate. A [4Fe-4S] cluster-binding site is contributed by C199. Residues S227, S228, N229, and S271 each coordinate (2E)-4-hydroxy-3-methylbut-2-enyl diphosphate. Residues S227, S228, N229, and S271 each contribute to the dimethylallyl diphosphate site. Residues S227, S228, N229, and S271 each contribute to the isopentenyl diphosphate site.

This sequence belongs to the IspH family. It depends on [4Fe-4S] cluster as a cofactor.

It carries out the reaction isopentenyl diphosphate + 2 oxidized [2Fe-2S]-[ferredoxin] + H2O = (2E)-4-hydroxy-3-methylbut-2-enyl diphosphate + 2 reduced [2Fe-2S]-[ferredoxin] + 2 H(+). The enzyme catalyses dimethylallyl diphosphate + 2 oxidized [2Fe-2S]-[ferredoxin] + H2O = (2E)-4-hydroxy-3-methylbut-2-enyl diphosphate + 2 reduced [2Fe-2S]-[ferredoxin] + 2 H(+). It functions in the pathway isoprenoid biosynthesis; dimethylallyl diphosphate biosynthesis; dimethylallyl diphosphate from (2E)-4-hydroxy-3-methylbutenyl diphosphate: step 1/1. The protein operates within isoprenoid biosynthesis; isopentenyl diphosphate biosynthesis via DXP pathway; isopentenyl diphosphate from 1-deoxy-D-xylulose 5-phosphate: step 6/6. Functionally, catalyzes the conversion of 1-hydroxy-2-methyl-2-(E)-butenyl 4-diphosphate (HMBPP) into a mixture of isopentenyl diphosphate (IPP) and dimethylallyl diphosphate (DMAPP). Acts in the terminal step of the DOXP/MEP pathway for isoprenoid precursor biosynthesis. The protein is 4-hydroxy-3-methylbut-2-enyl diphosphate reductase of Stenotrophomonas maltophilia (strain R551-3).